The chain runs to 236 residues: 2,3,4,5-tetrahydropyridine-2,6-dicarboxylate N-acetyltransferase (236 aa).

The protein belongs to the transferase hexapeptide repeat family. DapH subfamily.

It carries out the reaction (S)-2,3,4,5-tetrahydrodipicolinate + acetyl-CoA + H2O = L-2-acetamido-6-oxoheptanedioate + CoA. It functions in the pathway amino-acid biosynthesis; L-lysine biosynthesis via DAP pathway; LL-2,6-diaminopimelate from (S)-tetrahydrodipicolinate (acetylase route): step 1/3. Its function is as follows. Catalyzes the transfer of an acetyl group from acetyl-CoA to tetrahydrodipicolinate. The sequence is that of 2,3,4,5-tetrahydropyridine-2,6-dicarboxylate N-acetyltransferase from Thermotoga maritima (strain ATCC 43589 / DSM 3109 / JCM 10099 / NBRC 100826 / MSB8).